Here is a 211-residue protein sequence, read N- to C-terminus: Thiamine-phosphate synthase (211 aa).

Residues Gln37 to Lys41 and Asn69 contribute to the 4-amino-2-methyl-5-(diphosphooxymethyl)pyrimidine site. Mg(2+)-binding residues include Asp70 and Asp89. Ser108 lines the 4-amino-2-methyl-5-(diphosphooxymethyl)pyrimidine pocket. Thr134–Thr136 is a binding site for 2-[(2R,5Z)-2-carboxy-4-methylthiazol-5(2H)-ylidene]ethyl phosphate. A 4-amino-2-methyl-5-(diphosphooxymethyl)pyrimidine-binding site is contributed by Lys137. 2-[(2R,5Z)-2-carboxy-4-methylthiazol-5(2H)-ylidene]ethyl phosphate is bound by residues Gly166 and Val186–Ser187.

This sequence belongs to the thiamine-phosphate synthase family. Mg(2+) is required as a cofactor.

The catalysed reaction is 2-[(2R,5Z)-2-carboxy-4-methylthiazol-5(2H)-ylidene]ethyl phosphate + 4-amino-2-methyl-5-(diphosphooxymethyl)pyrimidine + 2 H(+) = thiamine phosphate + CO2 + diphosphate. It catalyses the reaction 2-(2-carboxy-4-methylthiazol-5-yl)ethyl phosphate + 4-amino-2-methyl-5-(diphosphooxymethyl)pyrimidine + 2 H(+) = thiamine phosphate + CO2 + diphosphate. The enzyme catalyses 4-methyl-5-(2-phosphooxyethyl)-thiazole + 4-amino-2-methyl-5-(diphosphooxymethyl)pyrimidine + H(+) = thiamine phosphate + diphosphate. Its pathway is cofactor biosynthesis; thiamine diphosphate biosynthesis; thiamine phosphate from 4-amino-2-methyl-5-diphosphomethylpyrimidine and 4-methyl-5-(2-phosphoethyl)-thiazole: step 1/1. Its function is as follows. Condenses 4-methyl-5-(beta-hydroxyethyl)thiazole monophosphate (THZ-P) and 2-methyl-4-amino-5-hydroxymethyl pyrimidine pyrophosphate (HMP-PP) to form thiamine monophosphate (TMP). The sequence is that of Thiamine-phosphate synthase from Escherichia coli O6:H1 (strain CFT073 / ATCC 700928 / UPEC).